The chain runs to 25 residues: M-poneritoxin-Na1b (25 aa).

It belongs to the non-disulfide-bridged peptide (NDBP) superfamily. Medium-length antimicrobial peptide (group 3) family. Ponericin-W subfamily. In terms of tissue distribution, expressed by the venom gland.

It localises to the secreted. Its subcellular location is the target cell membrane. Its function is as follows. Membrane-perturbating peptide with multiple activities. It is insecticidal, since it induces reversible paralysis in insects (L.cuprina) after 1 hour, but fails to kill flies. It shows a relatively strong and broad-spectrum antibacterial activity against both Gram-positive and Gram-negative bacteria (MIC&lt;20 uM). It is also anthelmintic, since it potently inhibits the larval development of the major pathogenic nematode of ruminants (H.contortus, IC(50)=2.8 uM). Interestingly, only at 10 uM, it increases adult males motility of the other nematode B.malayi for 24 hours post-treatment, followed by a reduction in motility for the rest of the experiment. It shows cytotoxic activity against HEK293 cells (EC(50)=4-6 uM) and induces hemolysis in human erythrocytes (EC(50)=40-62 uM). In addition, it causes an important increase in intracellular calcium concentration on neuronal and epithelial cell lines, which supports a non-specific membrane perturbation mechanism of action. In vivo, it induces pain by intraplantar injection into mice, suggesting a defensive function against vertebrate predators. The sequence is that of M-poneritoxin-Na1b from Neoponera apicalis (Ant).